The sequence spans 209 residues: Uracil phosphoribosyltransferase (209 aa).

5-phospho-alpha-D-ribose 1-diphosphate is bound by residues R79, R104, and 131–139; that span reads DPMLATGHS. Uracil is bound by residues I194 and 199–201; that span reads GDA. D200 lines the 5-phospho-alpha-D-ribose 1-diphosphate pocket.

Belongs to the UPRTase family. Requires Mg(2+) as cofactor.

It catalyses the reaction UMP + diphosphate = 5-phospho-alpha-D-ribose 1-diphosphate + uracil. It functions in the pathway pyrimidine metabolism; UMP biosynthesis via salvage pathway; UMP from uracil: step 1/1. Its activity is regulated as follows. Allosterically activated by GTP. Functionally, catalyzes the conversion of uracil and 5-phospho-alpha-D-ribose 1-diphosphate (PRPP) to UMP and diphosphate. The polypeptide is Uracil phosphoribosyltransferase (Caulobacter vibrioides (strain ATCC 19089 / CIP 103742 / CB 15) (Caulobacter crescentus)).